Consider the following 443-residue polypeptide: MEIASNKGVIADASTPAGRAGMSESEWREAIKFDSTDTGWVIMSIGMAIGAGIVFLPVQVGLMGLWVFLLSSVIGYPAMYLFQRLFINTLAESPECKDYPSVISGYLGKNWGILLGALYFVMLVIWMFVYSTAITNDSASYLHTFGVTEGLLSDSPFYGLVLICILVAISSRGEKLLFKISTGMVLTKLLVVAALGVSMVGMWHLYNVGSLPPLGLLVKNAIITLPFTLTSILFIQTLSPMVISYRSREKSIEVARHKALRAMNIAFGILFVTVFFYAVSFTLAMGHDEAVKAYEQNISALAIAAQFISGDGAAWVKVVSVILNIFAVMTAFFGVYLGFREATQGIVMNILRRKMPAEKINENLVQRGIMIFAILLAWSAIVLNAPVLSFTSICSPIFGMVGCLIPAWLVYKVPALHKYKGMSLYLIIVTGLLLCVSPFLAFS.

Topologically, residues 1-48 (MEIASNKGVIADASTPAGRAGMSESEWREAIKFDSTDTGWVIMSIGMA) are cytoplasmic. Residues 49–69 (IGAGIVFLPVQVGLMGLWVFL) form a helical membrane-spanning segment. The Periplasmic portion of the chain corresponds to 70–110 (LSSVIGYPAMYLFQRLFINTLAESPECKDYPSVISGYLGKN). Residues 111 to 131 (WGILLGALYFVMLVIWMFVYS) traverse the membrane as a helical segment. The Cytoplasmic portion of the chain corresponds to 132-149 (TAITNDSASYLHTFGVTE). Residues 150 to 170 (GLLSDSPFYGLVLICILVAIS) form a helical membrane-spanning segment. At 171–182 (SRGEKLLFKIST) the chain is on the periplasmic side. A helical transmembrane segment spans residues 183–203 (GMVLTKLLVVAALGVSMVGMW). Residues 204–214 (HLYNVGSLPPL) lie on the Cytoplasmic side of the membrane. A helical membrane pass occupies residues 215-235 (GLLVKNAIITLPFTLTSILFI). Residues 236–264 (QTLSPMVISYRSREKSIEVARHKALRAMN) are Periplasmic-facing. A helical transmembrane segment spans residues 265–285 (IAFGILFVTVFFYAVSFTLAM). Topologically, residues 286 to 297 (GHDEAVKAYEQN) are cytoplasmic. 2 helical membrane passes run 298–318 (ISAL…WVKV) and 319–339 (VSVI…YLGF). Residues 340 to 367 (REATQGIVMNILRRKMPAEKINENLVQR) are Cytoplasmic-facing. The helical transmembrane segment at 368–388 (GIMIFAILLAWSAIVLNAPVL) threads the bilayer. A topological domain (periplasmic) is located at residue Ser389. Residues 390-410 (FTSICSPIFGMVGCLIPAWLV) traverse the membrane as a helical segment. Residues 411 to 421 (YKVPALHKYKG) are Cytoplasmic-facing. Residues 422 to 442 (MSLYLIIVTGLLLCVSPFLAF) traverse the membrane as a helical segment. Ser443 is a topological domain (periplasmic).

It belongs to the amino acid/polyamine transporter 2 family. SdaC/TdcC subfamily.

The protein resides in the cell inner membrane. Plays a role in L-cysteine detoxification. May transport both D- and L-serine. This Escherichia coli (strain K12) protein is Probable serine transporter (dlsT).